The chain runs to 356 residues: Glutamine synthetase PR-2 (356 aa).

Positions 19-99 (IIAEYIWVGG…VICDVYTPAG (81 aa)) constitute a GS beta-grasp domain. The tract at residues 37-66 (ARTLPGPVDDPAKLPKWNYDGSSTDQAPGD) is disordered. The GS catalytic domain occupies 106-356 (KRYDAAKIFS…IAETTILWKP (251 aa)).

Belongs to the glutamine synthetase family. In terms of assembly, homooctamer. In terms of tissue distribution, roots.

It localises to the cytoplasm. It carries out the reaction L-glutamate + NH4(+) + ATP = L-glutamine + ADP + phosphate + H(+). This chain is Glutamine synthetase PR-2, found in Phaseolus vulgaris (Kidney bean).